Consider the following 235-residue polypeptide: Phosphoribosylaminoimidazole-succinocarboxamide synthase (235 aa).

This sequence belongs to the SAICAR synthetase family.

The catalysed reaction is 5-amino-1-(5-phospho-D-ribosyl)imidazole-4-carboxylate + L-aspartate + ATP = (2S)-2-[5-amino-1-(5-phospho-beta-D-ribosyl)imidazole-4-carboxamido]succinate + ADP + phosphate + 2 H(+). Its pathway is purine metabolism; IMP biosynthesis via de novo pathway; 5-amino-1-(5-phospho-D-ribosyl)imidazole-4-carboxamide from 5-amino-1-(5-phospho-D-ribosyl)imidazole-4-carboxylate: step 1/2. In Prosthecochloris aestuarii (strain DSM 271 / SK 413), this protein is Phosphoribosylaminoimidazole-succinocarboxamide synthase.